The sequence spans 72 residues: Translation initiation factor IF-1 (72 aa).

The S1-like domain maps to 1-72 (MAKSDVIEME…SKGRIVYRAR (72 aa)).

This sequence belongs to the IF-1 family. In terms of assembly, component of the 30S ribosomal translation pre-initiation complex which assembles on the 30S ribosome in the order IF-2 and IF-3, IF-1 and N-formylmethionyl-tRNA(fMet); mRNA recruitment can occur at any time during PIC assembly.

It localises to the cytoplasm. Its function is as follows. One of the essential components for the initiation of protein synthesis. Stabilizes the binding of IF-2 and IF-3 on the 30S subunit to which N-formylmethionyl-tRNA(fMet) subsequently binds. Helps modulate mRNA selection, yielding the 30S pre-initiation complex (PIC). Upon addition of the 50S ribosomal subunit IF-1, IF-2 and IF-3 are released leaving the mature 70S translation initiation complex. The protein is Translation initiation factor IF-1 of Marinobacter nauticus (strain ATCC 700491 / DSM 11845 / VT8) (Marinobacter aquaeolei).